Consider the following 187-residue polypeptide: Signal peptidase complex catalytic subunit SEC11 (187 aa).

The Cytoplasmic portion of the chain corresponds to Met1–Gln18. Residues Val19–Ile39 traverse the membrane as a helical; Signal-anchor for type II membrane protein segment. The Lumenal segment spans residues Thr40–Glu187. Active-site charge relay system residues include Ser53 and His92. N-linked (GlcNAc...) asparagine glycosylation occurs at Asn125. Asp129 acts as the Charge relay system in catalysis. The segment at Val173–Leu184 is C-terminal short (CTS) helix.

The protein belongs to the peptidase S26B family. Component of the signal peptidase complex (SPC) composed of a catalytic subunit SEC11 and three accessory subunits SPC1, SPC2 and SPC3. The complex induces a local thinning of the ER membrane which is used to measure the length of the signal peptide (SP) h-region of protein substrates. This ensures the selectivity of the complex towards h-regions shorter than 18-20 amino acids. SPC associates with the translocon complex.

Its subcellular location is the endoplasmic reticulum membrane. It catalyses the reaction Cleavage of hydrophobic, N-terminal signal or leader sequences from secreted and periplasmic proteins.. Catalytic component of the signal peptidase complex (SPC) which catalyzes the cleavage of N-terminal signal sequences from nascent proteins as they are translocated into the lumen of the endoplasmic reticulum. Specifically cleaves N-terminal signal peptides that contain a hydrophobic alpha-helix (h-region) shorter than 18-20 amino acids. In Ajellomyces capsulatus (strain G186AR / H82 / ATCC MYA-2454 / RMSCC 2432) (Darling's disease fungus), this protein is Signal peptidase complex catalytic subunit SEC11 (SEC11).